The sequence spans 492 residues: Probable cobyric acid synthase (492 aa).

Positions 252 to 444 (PIEVNIVKFS…FHGILENFEF (193 aa)) constitute a GATase cobBQ-type domain. The Nucleophile role is filled by cysteine 330. Residue histidine 436 is part of the active site.

The protein belongs to the CobB/CobQ family. CobQ subfamily.

It functions in the pathway cofactor biosynthesis; adenosylcobalamin biosynthesis. Catalyzes amidations at positions B, D, E, and G on adenosylcobyrinic A,C-diamide. NH(2) groups are provided by glutamine, and one molecule of ATP is hydrogenolyzed for each amidation. The protein is Probable cobyric acid synthase of Methanococcus maripaludis (strain C5 / ATCC BAA-1333).